A 413-amino-acid polypeptide reads, in one-letter code: Serine hydroxymethyltransferase (413 aa).

Residues Leu-117 and 121–123 (GHL) each bind (6S)-5,6,7,8-tetrahydrofolate. Lys-226 bears the N6-(pyridoxal phosphate)lysine mark. 349–351 (SPF) is a (6S)-5,6,7,8-tetrahydrofolate binding site.

It belongs to the SHMT family. In terms of assembly, homodimer. Requires pyridoxal 5'-phosphate as cofactor.

The protein localises to the cytoplasm. It catalyses the reaction (6R)-5,10-methylene-5,6,7,8-tetrahydrofolate + glycine + H2O = (6S)-5,6,7,8-tetrahydrofolate + L-serine. The protein operates within one-carbon metabolism; tetrahydrofolate interconversion. Its pathway is amino-acid biosynthesis; glycine biosynthesis; glycine from L-serine: step 1/1. Its function is as follows. Catalyzes the reversible interconversion of serine and glycine with tetrahydrofolate (THF) serving as the one-carbon carrier. This reaction serves as the major source of one-carbon groups required for the biosynthesis of purines, thymidylate, methionine, and other important biomolecules. Also exhibits THF-independent aldolase activity toward beta-hydroxyamino acids, producing glycine and aldehydes, via a retro-aldol mechanism. This is Serine hydroxymethyltransferase from Listeria welshimeri serovar 6b (strain ATCC 35897 / DSM 20650 / CCUG 15529 / CIP 8149 / NCTC 11857 / SLCC 5334 / V8).